We begin with the raw amino-acid sequence, 407 residues long: Polygalacturonase (407 aa).

The first 26 residues, 1-26 (MAPHLNIVPSMFVLLLLFISASKVQP), serve as a signal peptide directing secretion. 2 PbH1 repeats span residues 180 to 206 (CKNI…HMGK) and 207 to 228 (SEGV…SIGD). Asparagine 182 is a glycosylation site (N-linked (GlcNAc...) asparagine). Aspartate 221 serves as the catalytic Proton donor. A disulfide bridge connects residues cysteine 223 and cysteine 240. Histidine 244 is a catalytic residue. 2 PbH1 repeats span residues 260-281 (VEGI…RIKT) and 290-311 (VSEI…LIDQ). 4 N-linked (GlcNAc...) asparagine glycosylation sites follow: asparagine 267, asparagine 272, asparagine 302, and asparagine 331. Intrachain disulfides connect cysteine 351-cysteine 357 and cysteine 379-cysteine 395. Residues 357 to 384 (CQNVELADIDIQHNGAEPATSQCLNVKP) form a PbH1 5 repeat.

The protein belongs to the glycosyl hydrolase 28 family. As to expression, pollen.

It localises to the secreted. Its subcellular location is the cell wall. It catalyses the reaction (1,4-alpha-D-galacturonosyl)n+m + H2O = (1,4-alpha-D-galacturonosyl)n + (1,4-alpha-D-galacturonosyl)m.. Its function is as follows. May function in the depolymerization of the pectin in its walls during pollen tube elongation, or in that of the pistil during pollination. This chain is Polygalacturonase (G9), found in Gossypium barbadense (Sea Island cotton).